The following is a 656-amino-acid chain: UvrABC system protein C (656 aa).

A GIY-YIG domain is found at 41 to 120; it reads KSSGCYLFKD…IKTNKPYFNI (80 aa). Residues 230 to 265 form the UVR domain; the sequence is DDLEVFLERKMNQYSNDLEFENAAKIRDQISGLKLL.

It belongs to the UvrC family. As to quaternary structure, interacts with UvrB in an incision complex.

Its subcellular location is the cytoplasm. The UvrABC repair system catalyzes the recognition and processing of DNA lesions. UvrC both incises the 5' and 3' sides of the lesion. The N-terminal half is responsible for the 3' incision and the C-terminal half is responsible for the 5' incision. This is UvrABC system protein C from Prochlorococcus marinus subsp. pastoris (strain CCMP1986 / NIES-2087 / MED4).